The following is a 98-amino-acid chain: NADH-ubiquinone oxidoreductase chain 4L (98 aa).

3 consecutive transmembrane segments (helical) span residues 1–21, 29–49, and 61–81; these read MTMV…GLLM, SLLC…ITIL, and IILL…LVMV.

This sequence belongs to the complex I subunit 4L family. As to quaternary structure, core subunit of respiratory chain NADH dehydrogenase (Complex I) which is composed of 45 different subunits.

Its subcellular location is the mitochondrion inner membrane. The catalysed reaction is a ubiquinone + NADH + 5 H(+)(in) = a ubiquinol + NAD(+) + 4 H(+)(out). Core subunit of the mitochondrial membrane respiratory chain NADH dehydrogenase (Complex I) which catalyzes electron transfer from NADH through the respiratory chain, using ubiquinone as an electron acceptor. Part of the enzyme membrane arm which is embedded in the lipid bilayer and involved in proton translocation. The protein is NADH-ubiquinone oxidoreductase chain 4L (MT-ND4L) of Ommatophoca rossii (Ross seal).